The primary structure comprises 198 residues: Putative pseudouridine methyltransferase (198 aa).

Residues M132 and C186 each contribute to the S-adenosyl-L-methionine site.

This sequence belongs to the methyltransferase superfamily. TrmY family.

It is found in the cytoplasm. This is Putative pseudouridine methyltransferase from Shewanella baltica (strain OS185).